The chain runs to 1044 residues: Eukaryotic translation initiation factor 3 subunit A (1044 aa).

Residues 92–121 (LKKFIELAEKKVTEAQAKADEIQSSLESAA) are a coiled coil. One can recognise a PCI domain in the interval 339–523 (MTKAASFVLL…GVLTFDTDIF (185 aa)). Positions 611–907 (IDKKKEAATD…EARRAARKAG (297 aa)) form a coiled coil. Residues 797 to 901 (SEKRHEEFEK…QREEEAEARR (105 aa)) are compositionally biased toward basic and acidic residues. The tract at residues 797–1044 (SEKRHEEFEK…WVPRWKQQQS (248 aa)) is disordered. Composition is skewed to low complexity over residues 943 to 956 (KEAA…AAPA) and 1006 to 1017 (SSSSQPPSRTQT).

The protein belongs to the eIF-3 subunit A family. Component of the eukaryotic translation initiation factor 3 (eIF-3) complex.

The protein localises to the cytoplasm. In terms of biological role, RNA-binding component of the eukaryotic translation initiation factor 3 (eIF-3) complex, which is involved in protein synthesis of a specialized repertoire of mRNAs and, together with other initiation factors, stimulates binding of mRNA and methionyl-tRNAi to the 40S ribosome. The eIF-3 complex specifically targets and initiates translation of a subset of mRNAs involved in cell proliferation. In Aspergillus clavatus (strain ATCC 1007 / CBS 513.65 / DSM 816 / NCTC 3887 / NRRL 1 / QM 1276 / 107), this protein is Eukaryotic translation initiation factor 3 subunit A (tif32).